The sequence spans 143 residues: Nucleoside diphosphate kinase (143 aa).

Positions 11, 59, 87, 93, 104, and 114 each coordinate ATP. Catalysis depends on histidine 117, which acts as the Pros-phosphohistidine intermediate.

The protein belongs to the NDK family. Homotetramer. It depends on Mg(2+) as a cofactor.

The protein resides in the cytoplasm. It carries out the reaction a 2'-deoxyribonucleoside 5'-diphosphate + ATP = a 2'-deoxyribonucleoside 5'-triphosphate + ADP. The catalysed reaction is a ribonucleoside 5'-diphosphate + ATP = a ribonucleoside 5'-triphosphate + ADP. Functionally, major role in the synthesis of nucleoside triphosphates other than ATP. The ATP gamma phosphate is transferred to the NDP beta phosphate via a ping-pong mechanism, using a phosphorylated active-site intermediate. The protein is Nucleoside diphosphate kinase of Alteromonas mediterranea (strain DSM 17117 / CIP 110805 / LMG 28347 / Deep ecotype).